The chain runs to 531 residues: UDP-glucuronosyltransferase 1A7 (531 aa).

A signal peptide spans 1–25 (MAPADFPASLPLCVCLLLASGLAQA). Asn293 and Asn431 each carry an N-linked (GlcNAc...) asparagine glycan. The chain crosses the membrane as a helical span at residues 489–509 (VIGFLLAIVLTVVFIVFKCCA).

Belongs to the UDP-glycosyltransferase family. In terms of assembly, homodimer. Homooligomer. Interacts with UGT1A1, UGT1A3, UGT1A4, UGT1A6, UGT1A8, UGT1A9 and UGT1A10 to form heterodimers. Widely expressed with highest levels detected in colon and kidney.

The protein localises to the endoplasmic reticulum membrane. It carries out the reaction glucuronate acceptor + UDP-alpha-D-glucuronate = acceptor beta-D-glucuronoside + UDP + H(+). The enzyme catalyses 17alpha-estradiol + UDP-alpha-D-glucuronate = 17alpha-estradiol 3-O-(beta-D-glucuronate) + UDP + H(+). The catalysed reaction is prunetin + UDP-alpha-D-glucuronate = prunetin-5-O-beta-D-glucuronide + UDP. It catalyses the reaction 5-epi-5-F2t-IsoP + UDP-alpha-D-glucuronate = 5-epi-5-F2t-IsoP-glucuronide + UDP + H(+). It carries out the reaction (E)-ferulate + UDP-alpha-D-glucuronate = (E)-ferulic acid beta-D-glucuronate ester + UDP. The enzyme catalyses candesartan + UDP-alpha-D-glucuronate = candesartan O-beta-D-glucuronoside + UDP. The catalysed reaction is SN-38 + UDP-alpha-D-glucuronate = SN-38 O-beta-D-glucuronide + UDP + H(+). It catalyses the reaction mycophenolate + UDP-alpha-D-glucuronate = mycophenolate 7-O-beta-D-glucuronide + UDP + H(+). Functionally, UDP-glucuronosyltransferase (UGT) that catalyzes phase II biotransformation reactions in which lipophilic substrates are conjugated with glucuronic acid to increase the metabolite's water solubility, thereby facilitating excretion into either the urine or bile. Essential for the elimination and detoxification of drugs, xenobiotics and endogenous compounds. Catalyzes the glucuronidation of endogenous estrogen hormone epiestradiol. Involved in the glucuronidation of F2-isoprostane (5-epi-5-F2t-IsoP). Involved in the glucuronidation of the phytochemical ferulic acid at the carboxylic acid group. Also catalyzes the glucuronidation of the isoflavones genistein, daidzein, glycitein, formononetin, biochanin A and prunetin, which are phytoestrogens with anticancer and cardiovascular properties. Involved in the glucuronidation of the AGTR1 angiotensin receptor antagonist caderastan, a drug which can inhibit the effect of angiotensin II. Involved in the biotransformation of 7-ethyl-10-hydroxycamptothecin (SN-38), the pharmacologically active metabolite of the anticancer drug irinotecan. Also metabolizes mycophenolate, an immunosuppressive agent. The polypeptide is UDP-glucuronosyltransferase 1A7 (Mus musculus (Mouse)).